Here is a 112-residue protein sequence, read N- to C-terminus: Small ribosomal subunit protein bS16 (112 aa).

This sequence belongs to the bacterial ribosomal protein bS16 family.

This is Small ribosomal subunit protein bS16 from Aquifex aeolicus (strain VF5).